Reading from the N-terminus, the 125-residue chain is MSIRTERVAELIQRELSGIFEKELPRSGVLTTIVGVKITPDLSIARVYVSILGSKEMGASVMAHIQKENKHFRKLLSSKIRHQFKRMPSLEFYQDDLFDQAAHINELIRKANEASSPTPKPDDEA.

It belongs to the RbfA family. As to quaternary structure, monomer. Binds 30S ribosomal subunits, but not 50S ribosomal subunits or 70S ribosomes.

It is found in the cytoplasm. Functionally, one of several proteins that assist in the late maturation steps of the functional core of the 30S ribosomal subunit. Associates with free 30S ribosomal subunits (but not with 30S subunits that are part of 70S ribosomes or polysomes). Required for efficient processing of 16S rRNA. May interact with the 5'-terminal helix region of 16S rRNA. This is Ribosome-binding factor A from Chloroherpeton thalassium (strain ATCC 35110 / GB-78).